A 172-amino-acid chain; its full sequence is Putative B3 domain-containing protein At1g05615 (172 aa).

A DNA-binding region (TF-B3) is located at residues 69–169 (VDEGKIIDFE…NLAMVPLTPT (101 aa)).

The protein resides in the nucleus. This chain is Putative B3 domain-containing protein At1g05615, found in Arabidopsis thaliana (Mouse-ear cress).